The sequence spans 317 residues: MPVQGSQRRLLGSLNSTPTATPHLGLAANQTGARCLEMSIPDGLFLSLGLVSLVENVLVVTAIAKNRNLHSPMYCFICCLALSDLLVSGSNMLETAVTLLLEAGALAARAAVVQQLDNVIDVITCSSMLSSLCFLGAIAVDRYISIFYALRYHSIVTLPRARRAIAAIWVASVLCSTLFIAYYDHAAVLLCLVVFFLAMLVLMAVLYVHMLARACQHAQGIARLHKRQRLAHQGFGLKGAATLTILLGIFFLCWGPFFLHLTLIVLCPQHPTCSCIFKNFNLFLTLIICNAIIDPLIYAFRSQELRRTLKEVLLCSW.

Residues 1–37 lie on the Extracellular side of the membrane; it reads MPVQGSQRRLLGSLNSTPTATPHLGLAANQTGARCLE. The N-linked (GlcNAc...) asparagine glycan is linked to N29. Residues 38–63 form a helical membrane-spanning segment; the sequence is MSIPDGLFLSLGLVSLVENVLVVTAI. Over 64 to 72 the chain is Cytoplasmic; that stretch reads AKNRNLHSP. Residues 73-93 form a helical membrane-spanning segment; sequence MYCFICCLALSDLLVSGSNML. Over 94-118 the chain is Extracellular; it reads ETAVTLLLEAGALAARAAVVQQLDN. Residues 119-140 traverse the membrane as a helical segment; the sequence is VIDVITCSSMLSSLCFLGAIAV. The Cytoplasmic portion of the chain corresponds to 141 to 163; that stretch reads DRYISIFYALRYHSIVTLPRARR. A helical transmembrane segment spans residues 164-183; it reads AIAAIWVASVLCSTLFIAYY. The Extracellular segment spans residues 184-191; the sequence is DHAAVLLC. A helical transmembrane segment spans residues 192–211; that stretch reads LVVFFLAMLVLMAVLYVHML. Over 212-240 the chain is Cytoplasmic; sequence ARACQHAQGIARLHKRQRLAHQGFGLKGA. Residues 241–266 traverse the membrane as a helical segment; it reads ATLTILLGIFFLCWGPFFLHLTLIVL. Residues 267-279 lie on the Extracellular side of the membrane; it reads CPQHPTCSCIFKN. A helical transmembrane segment spans residues 280–300; it reads FNLFLTLIICNAIIDPLIYAF. The Cytoplasmic portion of the chain corresponds to 301–317; the sequence is RSQELRRTLKEVLLCSW. The S-palmitoyl cysteine moiety is linked to residue C315.

The protein belongs to the G-protein coupled receptor 1 family. In terms of assembly, interacts with MGRN1, but does not undergo MGRN1-mediated ubiquitination; this interaction competes with GNAS-binding and thus inhibits agonist-induced cAMP production. Interacts with OPN3; the interaction results in a decrease in MC1R-mediated cAMP signaling and ultimately a decrease in melanin production in melanocytes.

It is found in the cell membrane. Receptor for MSH (alpha, beta and gamma) and ACTH. The activity of this receptor is mediated by G proteins which activate adenylate cyclase. Mediates melanogenesis, the production of eumelanin (black/brown) and phaeomelanin (red/yellow), via regulation of cAMP signaling in melanocytes. The chain is Melanocyte-stimulating hormone receptor (MC1R) from Macaca nemestrina (Pig-tailed macaque).